The sequence spans 229 residues: Large ribosomal subunit protein uL1 (229 aa).

It belongs to the universal ribosomal protein uL1 family. As to quaternary structure, part of the 50S ribosomal subunit.

In terms of biological role, binds directly to 23S rRNA. The L1 stalk is quite mobile in the ribosome, and is involved in E site tRNA release. Protein L1 is also a translational repressor protein, it controls the translation of the L11 operon by binding to its mRNA. The sequence is that of Large ribosomal subunit protein uL1 from Streptococcus suis (strain 98HAH33).